A 164-amino-acid polypeptide reads, in one-letter code: ATP synthase subunit b 2 (164 aa).

The chain crosses the membrane as a helical span at residues 4-24 (TFWAFVGLVLFLALLVYFEVP).

It belongs to the ATPase B chain family. F-type ATPases have 2 components, F(1) - the catalytic core - and F(0) - the membrane proton channel. F(1) has five subunits: alpha(3), beta(3), gamma(1), delta(1), epsilon(1). F(0) has three main subunits: a(1), b(2) and c(10-14). The alpha and beta chains form an alternating ring which encloses part of the gamma chain. F(1) is attached to F(0) by a central stalk formed by the gamma and epsilon chains, while a peripheral stalk is formed by the delta and b chains.

It localises to the cell inner membrane. In terms of biological role, f(1)F(0) ATP synthase produces ATP from ADP in the presence of a proton or sodium gradient. F-type ATPases consist of two structural domains, F(1) containing the extramembraneous catalytic core and F(0) containing the membrane proton channel, linked together by a central stalk and a peripheral stalk. During catalysis, ATP synthesis in the catalytic domain of F(1) is coupled via a rotary mechanism of the central stalk subunits to proton translocation. Component of the F(0) channel, it forms part of the peripheral stalk, linking F(1) to F(0). The chain is ATP synthase subunit b 2 from Bartonella henselae (strain ATCC 49882 / DSM 28221 / CCUG 30454 / Houston 1) (Rochalimaea henselae).